Reading from the N-terminus, the 133-residue chain is Small ribosomal subunit protein uS9 (133 aa).

The segment at serine 94 to arginine 133 is disordered. The segment covering alanine 95–alanine 113 has biased composition (basic and acidic residues). Positions lysine 114–arginine 133 are enriched in basic residues.

This sequence belongs to the universal ribosomal protein uS9 family.

This Synechococcus sp. (strain CC9605) protein is Small ribosomal subunit protein uS9.